The following is a 440-amino-acid chain: tRNA modification GTPase MnmE (440 aa).

Positions 22, 79, and 118 each coordinate (6S)-5-formyl-5,6,7,8-tetrahydrofolate. A TrmE-type G domain is found at Gly214–Arg366. GTP-binding positions include Asn224–Ser229, Ser243–Thr249, and Asp268–Gly271. Mg(2+) contacts are provided by Ser228 and Thr249. Residue Lys440 participates in (6S)-5-formyl-5,6,7,8-tetrahydrofolate binding.

It belongs to the TRAFAC class TrmE-Era-EngA-EngB-Septin-like GTPase superfamily. TrmE GTPase family. In terms of assembly, homodimer. Heterotetramer of two MnmE and two MnmG subunits. K(+) serves as cofactor.

Its subcellular location is the cytoplasm. Exhibits a very high intrinsic GTPase hydrolysis rate. Involved in the addition of a carboxymethylaminomethyl (cmnm) group at the wobble position (U34) of certain tRNAs, forming tRNA-cmnm(5)s(2)U34. The chain is tRNA modification GTPase MnmE from Granulibacter bethesdensis (strain ATCC BAA-1260 / CGDNIH1).